The chain runs to 25 residues: Plasticin-L1 (25 aa).

It belongs to the frog skin active peptide (FSAP) family. Plasticin subfamily. Expressed by the skin glands.

It is found in the secreted. Its subcellular location is the target cell membrane. Functionally, may play an immunomodulatory role in frog skin in response to microbial pathogens, since it increases the production of the pro-inflammatory cytokines TNF-alpha, IL-1 beta, IL-12, and IL-23 by mouse peritoneal macrophages and has no effect on the production of the anti-inflammatory cytokine IL-10. It is not known whether stimulation of cytokine production arises from a non-specific interaction of the peptide with the macrophage membrane or from interaction with a specific receptor. Shows a low activity in stimulating insulin release from rat BRIN-BD11 beta cells, and acts without loss of integrity of the plasma membrane. Shows a marked affinity for both neutral and anionic membranes models. Does not show antibacterial (E.coli and S.aureus). Does not show hemolytic activity against human erythrocytes. This is Plasticin-L1 from Leptodactylus laticeps (Santa Fe frog).